The following is a 545-amino-acid chain: Protein BTN1 (545 aa).

The tract at residues 23–49 is disordered; that stretch reads AHSSASDPRRTMVTNTSESPLASRQAT. Positions 34–49 are enriched in polar residues; sequence MVTNTSESPLASRQAT. Transmembrane regions (helical) follow at residues 66-86, 97-117, 127-147, 205-225, and 234-254; these read AFFL…TAAL, LVSF…PYFL, VWSC…FPAL, VGWF…AWWV, and GMAI…IILP. Positions 276 to 304 are disordered; that stretch reads TEDDAVERSSSDDQPTTANDDRQDSTIHI. Transmembrane regions (helical) follow at residues 322 to 342, 408 to 428, and 440 to 460; these read MALL…VYAM, LLWL…TESL, and LVIV…VSVF.

It belongs to the battenin family.

The protein resides in the vacuole membrane. Functionally, involved in vacuolar transport and vacuole pH homeostasis. Also required for cytokinesis. The polypeptide is Protein BTN1 (BTN1) (Mycosarcoma maydis (Corn smut fungus)).